A 609-amino-acid chain; its full sequence is Proteasome-associated ATPase (609 aa).

Positions 1-22 (MGESERSEAFNPPREAGMSSGD) are disordered. Residues 20–96 (SGDIAELEQL…LREEVDRLGQ (77 aa)) adopt a coiled-coil conformation. An ATP-binding site is contributed by 296-301 (GCGKTL). The tract at residues 608-609 (YL) is docks into pockets in the proteasome alpha-ring.

The protein belongs to the AAA ATPase family. Homohexamer. Assembles into a hexameric ring structure that caps the 20S proteasome core. Strongly interacts with the prokaryotic ubiquitin-like protein Pup through a hydrophobic interface; the interacting region of ARC lies in its N-terminal coiled-coil domain. There is one Pup binding site per ARC hexamer ring. Upon ATP-binding, the C-terminus of ARC interacts with the alpha-rings of the proteasome core, possibly by binding to the intersubunit pockets.

It functions in the pathway protein degradation; proteasomal Pup-dependent pathway. ATPase which is responsible for recognizing, binding, unfolding and translocation of pupylated proteins into the bacterial 20S proteasome core particle. May be essential for opening the gate of the 20S proteasome via an interaction with its C-terminus, thereby allowing substrate entry and access to the site of proteolysis. Thus, the C-termini of the proteasomal ATPase may function like a 'key in a lock' to induce gate opening and therefore regulate proteolysis. This is Proteasome-associated ATPase from Mycobacterium leprae (strain Br4923).